The following is a 169-amino-acid chain: Peptide methionine sulfoxide reductase MsrA (169 aa).

Cys-13 is a catalytic residue.

Belongs to the MsrA Met sulfoxide reductase family.

The enzyme catalyses L-methionyl-[protein] + [thioredoxin]-disulfide + H2O = L-methionyl-(S)-S-oxide-[protein] + [thioredoxin]-dithiol. It carries out the reaction [thioredoxin]-disulfide + L-methionine + H2O = L-methionine (S)-S-oxide + [thioredoxin]-dithiol. In terms of biological role, has an important function as a repair enzyme for proteins that have been inactivated by oxidation. Catalyzes the reversible oxidation-reduction of methionine sulfoxide in proteins to methionine. The sequence is that of Peptide methionine sulfoxide reductase MsrA from Mycolicibacterium vanbaalenii (strain DSM 7251 / JCM 13017 / BCRC 16820 / KCTC 9966 / NRRL B-24157 / PYR-1) (Mycobacterium vanbaalenii).